Consider the following 278-residue polypeptide: Large ribosomal subunit protein uL2 (278 aa).

A disordered region spans residues 222-278 (GVVMNPIDHPHGGGEGRTSGGRHPVTPWGKPTKGKKTRSNKSTDKFILISRHKRKKK).

It belongs to the universal ribosomal protein uL2 family. Part of the 50S ribosomal subunit. Forms a bridge to the 30S subunit in the 70S ribosome.

Its function is as follows. One of the primary rRNA binding proteins. Required for association of the 30S and 50S subunits to form the 70S ribosome, for tRNA binding and peptide bond formation. It has been suggested to have peptidyltransferase activity; this is somewhat controversial. Makes several contacts with the 16S rRNA in the 70S ribosome. This Rhodopseudomonas palustris (strain BisB5) protein is Large ribosomal subunit protein uL2.